The chain runs to 151 residues: Deoxyuridine 5'-triphosphate nucleotidohydrolase (151 aa).

Residues arginine 70–glycine 72, asparagine 83, leucine 87–aspartate 89, and methionine 97 contribute to the substrate site.

This sequence belongs to the dUTPase family. It depends on Mg(2+) as a cofactor.

It carries out the reaction dUTP + H2O = dUMP + diphosphate + H(+). Its pathway is pyrimidine metabolism; dUMP biosynthesis; dUMP from dCTP (dUTP route): step 2/2. Functionally, this enzyme is involved in nucleotide metabolism: it produces dUMP, the immediate precursor of thymidine nucleotides and it decreases the intracellular concentration of dUTP so that uracil cannot be incorporated into DNA. The protein is Deoxyuridine 5'-triphosphate nucleotidohydrolase of Pseudomonas fluorescens (strain SBW25).